A 254-amino-acid chain; its full sequence is 2-dehydro-3-deoxy-D-gluconate 5-dehydrogenase (254 aa).

16–40 (LVTGPGTGIGQGIAKALAGAGADII) provides a ligand contact to NAD(+). Ser146 lines the substrate pocket. Tyr159 functions as the Proton acceptor in the catalytic mechanism.

It belongs to the short-chain dehydrogenases/reductases (SDR) family.

It carries out the reaction 2-dehydro-3-deoxy-D-gluconate + NAD(+) = 3-deoxy-D-glycero-2,5-hexodiulosonate + NADH + H(+). It functions in the pathway glycan metabolism; pectin degradation; 2-dehydro-3-deoxy-D-gluconate from pectin: step 5/5. Catalyzes the reduction of 2,5-diketo-3-deoxygluconate (DKII or 4,6-dihydroxy-2,5-dioxohexanoate) into 2-keto-3-deoxygluconate (KDG or 2-dehydro-3-deoxygluconate) with a concomitant oxidation of NADH. This is 2-dehydro-3-deoxy-D-gluconate 5-dehydrogenase (kduD) from Bacillus subtilis (strain 168).